Consider the following 191-residue polypeptide: MKVVIGLGNPGKKYEKTRHNIGFIAVDNLRKKFNISDEREKFQALVSEKNIDGEKVIFFKPQTFMNLSGNSVIEIINFYKLDPKKDIIVIYDDMDLSFGDIRIREKGSSGGHNGIKSIISHIGEEFIRIKCGIGAKERDAVEHVLGEFNQTEQKDLDEILEKINNCVIEMLSVQNLDRIMQKYNKKKEISK.

Residue Tyr14 coordinates tRNA. His19 serves as the catalytic Proton acceptor. TRNA is bound by residues Phe64, Asn66, and Asn113.

The protein belongs to the PTH family. In terms of assembly, monomer.

Its subcellular location is the cytoplasm. It carries out the reaction an N-acyl-L-alpha-aminoacyl-tRNA + H2O = an N-acyl-L-amino acid + a tRNA + H(+). In terms of biological role, hydrolyzes ribosome-free peptidyl-tRNAs (with 1 or more amino acids incorporated), which drop off the ribosome during protein synthesis, or as a result of ribosome stalling. Its function is as follows. Catalyzes the release of premature peptidyl moieties from peptidyl-tRNA molecules trapped in stalled 50S ribosomal subunits, and thus maintains levels of free tRNAs and 50S ribosomes. The sequence is that of Peptidyl-tRNA hydrolase from Fusobacterium nucleatum subsp. nucleatum (strain ATCC 25586 / DSM 15643 / BCRC 10681 / CIP 101130 / JCM 8532 / KCTC 2640 / LMG 13131 / VPI 4355).